Here is a 422-residue protein sequence, read N- to C-terminus: UDP-N-acetylglucosamine 1-carboxyvinyltransferase (422 aa).

A phosphoenolpyruvate-binding site is contributed by 22–23; the sequence is KN. R94 serves as a coordination point for UDP-N-acetyl-alpha-D-glucosamine. Catalysis depends on C118, which acts as the Proton donor. C118 carries the post-translational modification 2-(S-cysteinyl)pyruvic acid O-phosphothioketal. Residues 123–127, D309, and L331 contribute to the UDP-N-acetyl-alpha-D-glucosamine site; that span reads RPIDL.

It belongs to the EPSP synthase family. MurA subfamily.

It is found in the cytoplasm. It carries out the reaction phosphoenolpyruvate + UDP-N-acetyl-alpha-D-glucosamine = UDP-N-acetyl-3-O-(1-carboxyvinyl)-alpha-D-glucosamine + phosphate. The protein operates within cell wall biogenesis; peptidoglycan biosynthesis. Functionally, cell wall formation. Adds enolpyruvyl to UDP-N-acetylglucosamine. The sequence is that of UDP-N-acetylglucosamine 1-carboxyvinyltransferase from Sulfurimonas denitrificans (strain ATCC 33889 / DSM 1251) (Thiomicrospira denitrificans (strain ATCC 33889 / DSM 1251)).